The primary structure comprises 540 residues: 2,3-bisphosphoglycerate-independent phosphoglycerate mutase (540 aa).

Mn(2+) is bound by residues Asp-13 and Ser-63. Ser-63 acts as the Phosphoserine intermediate in catalysis. Substrate contacts are provided by residues His-124, 154 to 155 (RD), Arg-186, Arg-192, 262 to 265 (RPDR), and Lys-356. 5 residues coordinate Mn(2+): Asp-423, His-427, Asp-464, His-465, and His-483.

This sequence belongs to the BPG-independent phosphoglycerate mutase family. As to quaternary structure, monomer. It depends on Mn(2+) as a cofactor.

The catalysed reaction is (2R)-2-phosphoglycerate = (2R)-3-phosphoglycerate. The protein operates within carbohydrate degradation; glycolysis; pyruvate from D-glyceraldehyde 3-phosphate: step 3/5. Its function is as follows. Catalyzes the interconversion of 2-phosphoglycerate and 3-phosphoglycerate. This is 2,3-bisphosphoglycerate-independent phosphoglycerate mutase from Chloroflexus aurantiacus (strain ATCC 29366 / DSM 635 / J-10-fl).